A 76-amino-acid polypeptide reads, in one-letter code: U7-lycotoxin-Ls1c (76 aa).

Positions 1 to 22 are cleaved as a signal peptide; that stretch reads MKLIIFTGLALFLLVSLIDVEA. The propeptide occupies 23-26; sequence QNEG.

It belongs to the neurotoxin 19 (CSTX) family. 07 (U7-Lctx) subfamily. In terms of processing, contains 4 disulfide bonds. Expressed by the venom gland.

Its subcellular location is the secreted. This chain is U7-lycotoxin-Ls1c, found in Lycosa singoriensis (Wolf spider).